A 406-amino-acid chain; its full sequence is 5-cytosine rRNA methyltransferase NSUN4 (406 aa).

Residues glycine 207, glycine 208, lysine 209, aspartate 226, arginine 231, aspartate 259, glycine 260, and aspartate 277 each coordinate S-adenosyl-L-methionine. Catalysis depends on cysteine 332, which acts as the Nucleophile.

Belongs to the class I-like SAM-binding methyltransferase superfamily. RsmB/NOP family.

It localises to the mitochondrion. It catalyses the reaction a cytidine in rRNA + S-adenosyl-L-methionine = a 5-methylcytidine in rRNA + S-adenosyl-L-homocysteine + H(+). The catalysed reaction is a cytidine in mRNA + S-adenosyl-L-methionine = a 5-methylcytidine in mRNA + S-adenosyl-L-homocysteine + H(+). In terms of biological role, mitochondrial RNA cytosine C(5)-methyltransferase that methylates cytosine to 5-methylcytosine (m5C) in various RNAs, such as rRNAs, mRNAs and some long non-coding RNAs (lncRNAs). Involved in mitochondrial ribosome small subunit (SSU) maturation by catalyzing methylation of mitochondrial 12S rRNA. The protein is 5-cytosine rRNA methyltransferase NSUN4 (nsun4) of Xenopus laevis (African clawed frog).